Reading from the N-terminus, the 201-residue chain is Putative ferritin heavy polypeptide-like 19 (201 aa).

The Ferritin-like diiron domain occupies 1–123 (MAFYFDQDDA…GYLSNLHKMG (123 aa)).

The protein belongs to the ferritin family.

The polypeptide is Putative ferritin heavy polypeptide-like 19 (FTH1P19) (Homo sapiens (Human)).